The chain runs to 331 residues: Serine/threonine-protein phosphatase PP1 isozyme 7 (331 aa).

At M1 the chain carries N-acetylmethionine. Positions 60, 62, 88, and 120 each coordinate Mn(2+). H121 serves as the catalytic Proton donor. Positions 169 and 244 each coordinate Mn(2+).

It belongs to the PPP phosphatase family. PP-1 subfamily. Mn(2+) serves as cofactor. As to expression, expressed in roots, rosettes and flowers.

Its subcellular location is the nucleus. It localises to the cytoplasm. It catalyses the reaction O-phospho-L-seryl-[protein] + H2O = L-seryl-[protein] + phosphate. It carries out the reaction O-phospho-L-threonyl-[protein] + H2O = L-threonyl-[protein] + phosphate. With respect to regulation, phosphatase activity is strongly reduced by the protein phosphatase inhibitor 2 (I-2). Serine/threonine-protein phosphatase that possesses phosphatase activity toward para-nitrophenyl phosphate (pNPP) in vitro. This chain is Serine/threonine-protein phosphatase PP1 isozyme 7, found in Arabidopsis thaliana (Mouse-ear cress).